An 89-amino-acid chain; its full sequence is Small ribosomal subunit protein uS14 (89 aa).

It belongs to the universal ribosomal protein uS14 family. Part of the 30S ribosomal subunit. Contacts proteins S3 and S10.

In terms of biological role, binds 16S rRNA, required for the assembly of 30S particles and may also be responsible for determining the conformation of the 16S rRNA at the A site. This is Small ribosomal subunit protein uS14 from Parabacteroides distasonis (strain ATCC 8503 / DSM 20701 / CIP 104284 / JCM 5825 / NCTC 11152).